The primary structure comprises 684 residues: ATP-dependent DNA helicase RecG (684 aa).

Positions 51–148 (RHIASMATLQ…ADVPQFQAPH (98 aa)) are wedge domain. In terms of domain architecture, Helicase ATP-binding spans 278–439 (DLARHRPMRR…VHADLEVSVI (162 aa)). 291–298 (GDVGSGKT) contributes to the ATP binding site. The DEAH box motif lies at 392–395 (DEQH).

Belongs to the helicase family. RecG subfamily. As to quaternary structure, monomer.

The enzyme catalyses Couples ATP hydrolysis with the unwinding of duplex DNA by translocating in the 3'-5' direction.. It catalyses the reaction ATP + H2O = ADP + phosphate + H(+). Its function is as follows. Plays a critical role in recombination and DNA repair. Helps process Holliday junction intermediates to mature products by catalyzing branch migration. Has replication fork regression activity, unwinds stalled or blocked replication forks to make a HJ that can be resolved. Has a DNA unwinding activity characteristic of a DNA helicase with 3'-5' polarity. The sequence is that of ATP-dependent DNA helicase RecG from Acidithiobacillus ferridurans.